The chain runs to 448 residues: Trigger factor (448 aa).

The PPIase FKBP-type domain maps to 167-253 (GSIVRVDFVE…VKDIKRRDIP (87 aa)).

Belongs to the FKBP-type PPIase family. Tig subfamily.

The protein localises to the cytoplasm. The catalysed reaction is [protein]-peptidylproline (omega=180) = [protein]-peptidylproline (omega=0). In terms of biological role, involved in protein export. Acts as a chaperone by maintaining the newly synthesized protein in an open conformation. Functions as a peptidyl-prolyl cis-trans isomerase. The sequence is that of Trigger factor from Borrelia duttonii (strain Ly).